A 232-amino-acid chain; its full sequence is BTB/POZ domain-containing protein KCTD11 (232 aa).

One can recognise a BTB domain in the interval 1 to 49 (MLGAMFRAGTPMTPNLNPEGGGHYFIDRDGKAFRHILNFLRLGRLDLPL).

As to quaternary structure, homopentamer. Interacts with KCTD6 and KCTD21; KCTD11 and KCTD6 or KCTD21 may associate in pentameric assemblies. Component of the BCR(KCTD11) E3 ubiquitin ligase complex, at least composed of CUL3 and KCTD11 and RBX1. Interacts (via BTB domain) with CUL3; initially a 4:4 stoichiometry has been reported, however, electron microscopy revealed pentameric states of the BTB domain.

Its pathway is protein modification; protein ubiquitination. Functionally, plays a role as a marker and a regulator of neuronal differentiation; Up-regulated by a variety of neurogenic signals, such as retinoic acid, epidermal growth factor/EGF and NGFB/nerve growth factor. Induces apoptosis, growth arrest and the expression of cyclin-dependent kinase inhibitor CDKN1B. Plays a role as a tumor repressor and inhibits cell growth and tumorigenicity of medulloblastoma (MDB). Acts as a probable substrate-specific adapter for a BCR (BTB-CUL3-RBX1) E3 ubiquitin-protein ligase complex towards HDAC1. Functions as antagonist of the Hedgehog pathway on cell proliferation and differentiation by affecting the nuclear transfer of transcription factor GLI1, thus maintaining cerebellar granule cells in undifferentiated state, this effect probably occurs via HDAC1 down-regulation, keeping GLI1 acetylated and inactive. The polypeptide is BTB/POZ domain-containing protein KCTD11 (KCTD11) (Bos taurus (Bovine)).